A 244-amino-acid polypeptide reads, in one-letter code: Lymphotoxin-beta (244 aa).

Residues M1–S18 lie on the Cytoplasmic side of the membrane. A helical; Signal-anchor for type II membrane protein transmembrane segment spans residues L19–P48. The Extracellular portion of the chain corresponds to Q49–G244. A THD domain is found at P88–V243. N-linked (GlcNAc...) asparagine glycosylation is present at N222.

It belongs to the tumor necrosis factor family. In terms of assembly, heterotrimer of either two LTB and one LTA subunits or (less prevalent) two LTA and one LTB subunits.

Its subcellular location is the membrane. Functionally, cytokine that binds to LTBR/TNFRSF3. May play a specific role in immune response regulation. Provides the membrane anchor for the attachment of the heterotrimeric complex to the cell surface. The protein is Lymphotoxin-beta (LTB) of Macaca mulatta (Rhesus macaque).